We begin with the raw amino-acid sequence, 242 residues long: N-acetylmuramate alpha-1-phosphate uridylyltransferase (242 aa).

UTP is bound by residues 16 to 18 and K28; that span reads GTR. N113 contributes to the substrate binding site. A Mg(2+)-binding site is contributed by D115. Position 158 (D158) interacts with substrate.

It belongs to the nucleotidyltransferase MurU family. In terms of assembly, monomer. Mg(2+) is required as a cofactor.

The enzyme catalyses N-acetyl-alpha-D-muramate 1-phosphate + UDP + H(+) = UDP-N-acetyl-alpha-D-muramate + phosphate. Its pathway is cell wall biogenesis; peptidoglycan recycling. Catalyzes the formation of UDP-N-acetylmuramate (UDP-MurNAc), a crucial precursor of the bacterial peptidoglycan cell wall, from UTP and MurNAc-alpha-1P. Is likely involved in peptidoglycan recycling as part of a cell wall recycling pathway that bypasses de novo biosynthesis of the peptidoglycan precursor UDP-MurNAc. Is able to complement the fosfomycin sensitivity phenotype of a P.putida mutant lacking murU. This is N-acetylmuramate alpha-1-phosphate uridylyltransferase from Caulobacter vibrioides (strain ATCC 19089 / CIP 103742 / CB 15) (Caulobacter crescentus).